Reading from the N-terminus, the 538-residue chain is CTP synthase (538 aa).

The tract at residues 1-266 is amidoligase domain; it reads MKTKFIFVTG…DDQVVDKLNI (266 aa). Ser-14 provides a ligand contact to CTP. Ser-14 is a binding site for UTP. ATP is bound by residues 15–20 and Asp-72; that span reads SIGKGL. Residues Asp-72 and Glu-140 each coordinate Mg(2+). CTP contacts are provided by residues 147-149, 187-192, and Lys-223; these read DIE and KTKPTQ. Residues 187–192 and Lys-223 each bind UTP; that span reads KTKPTQ. The Glutamine amidotransferase type-1 domain maps to 292 to 534; the sequence is HIAIVGKYVN…IAAALEHRGK (243 aa). Gly-354 serves as a coordination point for L-glutamine. Cys-381 (nucleophile; for glutamine hydrolysis) is an active-site residue. Residues 382–385, Glu-405, and Arg-462 each bind L-glutamine; that span reads LGMQ. Residues His-507 and Glu-509 contribute to the active site.

It belongs to the CTP synthase family. In terms of assembly, homotetramer.

It carries out the reaction UTP + L-glutamine + ATP + H2O = CTP + L-glutamate + ADP + phosphate + 2 H(+). The enzyme catalyses L-glutamine + H2O = L-glutamate + NH4(+). The catalysed reaction is UTP + NH4(+) + ATP = CTP + ADP + phosphate + 2 H(+). The protein operates within pyrimidine metabolism; CTP biosynthesis via de novo pathway; CTP from UDP: step 2/2. Its activity is regulated as follows. Allosterically activated by GTP, when glutamine is the substrate; GTP has no effect on the reaction when ammonia is the substrate. The allosteric effector GTP functions by stabilizing the protein conformation that binds the tetrahedral intermediate(s) formed during glutamine hydrolysis. Inhibited by the product CTP, via allosteric rather than competitive inhibition. In terms of biological role, catalyzes the ATP-dependent amination of UTP to CTP with either L-glutamine or ammonia as the source of nitrogen. Regulates intracellular CTP levels through interactions with the four ribonucleotide triphosphates. The protein is CTP synthase of Geobacter metallireducens (strain ATCC 53774 / DSM 7210 / GS-15).